The following is a 408-amino-acid chain: L-lactate oxidase (408 aa).

The FMN hydroxy acid dehydrogenase domain maps to 14–370; it reads NEAIKMVNVD…KHADIRQINY (357 aa). Tyrosine 40 provides a ligand contact to pyruvate. FMN-binding positions include 93–95, serine 122, and glutamine 144; that span reads PIA. Tyrosine 146 contacts pyruvate. Threonine 172 serves as a coordination point for FMN. Arginine 181 is a binding site for pyruvate. Lysine 241 and serine 263 together coordinate FMN. Residues histidine 265 and arginine 268 each coordinate pyruvate. Residue histidine 265 is the Proton acceptor of the active site. FMN contacts are provided by residues 296 to 300 and arginine 320; that span reads DSGVR.

This sequence belongs to the FMN-dependent alpha-hydroxy acid dehydrogenase family. In terms of assembly, homotetramer. It depends on FMN as a cofactor.

It catalyses the reaction a (2S)-2-hydroxycarboxylate + O2 = a 2-oxocarboxylate + H2O2. It carries out the reaction (S)-lactate + O2 = pyruvate + H2O2. The enzyme catalyses 2-hydroxyoctanoate + O2 = 2-oxooctanoate + H2O2. The catalysed reaction is glycolate + O2 = glyoxylate + H2O2. It catalyses the reaction mandelate + O2 = phenylglyoxylate + H2O2. It carries out the reaction 2-hydroxyoctadecanoate + O2 = 2-oxooctadecanoate + H2O2. Functionally, oxidase that catalyzes the oxidation of a broad range of 2-hydroxyacids in vitro, such as (S)-lactate, 2-hydroxyoctanoate, and to a lesser extent glycolate, mandelate and 2-hydroxyoctadecanoate, to the corresponding 2-oxoacids, with a reduction of O2 to H2O2. May be involved in the utilization of L-lactate as an energy source for growth. The chain is L-lactate oxidase from Lactobacillus jensenii.